The following is a 121-amino-acid chain: Flagellar protein FliT (121 aa).

The required for homodimerization stretch occupies residues 1 to 50 (MNHAPHLYFAWQQLVEKSQLMLRLATEEQWDELIASEMAYVNAVQEIAHL). Positions 60-98 (MQEQLRPMLRLILDNESKVKQLLQIRMDELAKLVGQSSV) are fliD binding.

The protein belongs to the FliT family. Homodimer. Interacts with FliD and FlhC.

It is found in the cytoplasm. The protein resides in the cytosol. In terms of biological role, dual-function protein that regulates the transcription of class 2 flagellar operons and that also acts as an export chaperone for the filament-capping protein FliD. As a transcriptional regulator, acts as an anti-FlhDC factor; it directly binds FlhC, thus inhibiting the binding of the FlhC/FlhD complex to class 2 promoters, resulting in decreased expression of class 2 flagellar operons. As a chaperone, effects FliD transition to the membrane by preventing its premature polymerization, and by directing it to the export apparatus. This chain is Flagellar protein FliT, found in Escherichia coli O157:H7.